We begin with the raw amino-acid sequence, 436 residues long: Diaminobutyrate--2-oxoglutarate transaminase (436 aa).

N6-(pyridoxal phosphate)lysine is present on lysine 269.

Belongs to the class-III pyridoxal-phosphate-dependent aminotransferase family. Pyridoxal 5'-phosphate serves as cofactor.

The enzyme catalyses L-2,4-diaminobutanoate + 2-oxoglutarate = L-aspartate 4-semialdehyde + L-glutamate. It participates in amine and polyamine biosynthesis; ectoine biosynthesis; L-ectoine from L-aspartate 4-semialdehyde: step 1/3. Its function is as follows. Catalyzes reversively the conversion of L-aspartate beta-semialdehyde (ASA) to L-2,4-diaminobutyrate (DABA) by transamination with L-glutamate. The sequence is that of Diaminobutyrate--2-oxoglutarate transaminase (ectB) from Nocardia farcinica (strain IFM 10152).